A 358-amino-acid chain; its full sequence is 3-isopropylmalate dehydrogenase (358 aa).

Residue 77-90 (GPKWDNLPIDQRPE) participates in NAD(+) binding. Residues R98, R108, R137, and D221 each coordinate substrate. D221, D245, and D249 together coordinate Mg(2+). An NAD(+)-binding site is contributed by 279–291 (GSAPDIAHLNIAN).

It belongs to the isocitrate and isopropylmalate dehydrogenases family. LeuB type 1 subfamily. As to quaternary structure, homodimer. Requires Mg(2+) as cofactor. The cofactor is Mn(2+).

It is found in the cytoplasm. It catalyses the reaction (2R,3S)-3-isopropylmalate + NAD(+) = 4-methyl-2-oxopentanoate + CO2 + NADH. It functions in the pathway amino-acid biosynthesis; L-leucine biosynthesis; L-leucine from 3-methyl-2-oxobutanoate: step 3/4. Catalyzes the oxidation of 3-carboxy-2-hydroxy-4-methylpentanoate (3-isopropylmalate) to 3-carboxy-4-methyl-2-oxopentanoate. The product decarboxylates to 4-methyl-2 oxopentanoate. In Campylobacter jejuni (strain RM1221), this protein is 3-isopropylmalate dehydrogenase.